Consider the following 159-residue polypeptide: SsrA-binding protein (159 aa).

A compositionally biased stretch (basic and acidic residues) spans 131-148 (YDKRQTLREKQDRREAER). A disordered region spans residues 131–159 (YDKRQTLREKQDRREAERTISAIKRKQRA).

Belongs to the SmpB family.

It is found in the cytoplasm. In terms of biological role, required for rescue of stalled ribosomes mediated by trans-translation. Binds to transfer-messenger RNA (tmRNA), required for stable association of tmRNA with ribosomes. tmRNA and SmpB together mimic tRNA shape, replacing the anticodon stem-loop with SmpB. tmRNA is encoded by the ssrA gene; the 2 termini fold to resemble tRNA(Ala) and it encodes a 'tag peptide', a short internal open reading frame. During trans-translation Ala-aminoacylated tmRNA acts like a tRNA, entering the A-site of stalled ribosomes, displacing the stalled mRNA. The ribosome then switches to translate the ORF on the tmRNA; the nascent peptide is terminated with the 'tag peptide' encoded by the tmRNA and targeted for degradation. The ribosome is freed to recommence translation, which seems to be the essential function of trans-translation. The sequence is that of SsrA-binding protein from Streptomyces coelicolor (strain ATCC BAA-471 / A3(2) / M145).